Here is a 335-residue protein sequence, read N- to C-terminus: MTLPLLGPMSLSGFEHSWFFLFIFIVFGLAAFYVMMQVARQRRMLRFANMELLESVAPNRPVQWRHVPAILLMLALLLFTIAMAGPTNDVRIPRNRAVVMLVIDVSQSMRATDVEPNRMAAAQEAAKQFAGELTPGINLGLIAYAGTATVLVSPTTNRYATKNALDKLQFADRTATGEAIFTALQAIATVGAVIGGGEMPPPARIVLFSDGKETMPTNPDNPKGAYTAARTAKDQGVPISTISFGTVYGFVEINGQRQPVPVDDETMKKVAQLSGGNSYNAATLAELKAVYASLQQQIGYETIKGDASAGWLRLGVLVLALAALTALLINRRLPT.

A run of 2 helical transmembrane segments spans residues 18-38 and 67-87; these read WFFL…MMQV and VPAI…AGPT. The VWFA domain maps to 98–294; that stretch reads VVMLVIDVSQ…AELKAVYASL (197 aa). A helical transmembrane segment spans residues 309–329; that stretch reads AGWLRLGVLVLALAALTALLI.

The protein belongs to the UPF0353 family.

It is found in the cell membrane. The chain is UPF0353 protein MLBr01808 from Mycobacterium leprae (strain Br4923).